Consider the following 482-residue polypeptide: Probable glycine dehydrogenase (decarboxylating) subunit 2 (482 aa).

K267 is modified (N6-(pyridoxal phosphate)lysine).

This sequence belongs to the GcvP family. C-terminal subunit subfamily. In terms of assembly, the glycine cleavage system is composed of four proteins: P, T, L and H. In this organism, the P 'protein' is a heterodimer of two subunits. The cofactor is pyridoxal 5'-phosphate.

The catalysed reaction is N(6)-[(R)-lipoyl]-L-lysyl-[glycine-cleavage complex H protein] + glycine + H(+) = N(6)-[(R)-S(8)-aminomethyldihydrolipoyl]-L-lysyl-[glycine-cleavage complex H protein] + CO2. In terms of biological role, the glycine cleavage system catalyzes the degradation of glycine. The P protein binds the alpha-amino group of glycine through its pyridoxal phosphate cofactor; CO(2) is released and the remaining methylamine moiety is then transferred to the lipoamide cofactor of the H protein. This is Probable glycine dehydrogenase (decarboxylating) subunit 2 from Aquifex aeolicus (strain VF5).